The sequence spans 291 residues: UDP-N-acetylenolpyruvoylglucosamine reductase (291 aa).

Residues 22–187 enclose the FAD-binding PCMH-type domain; sequence RIGGPARYFK…ASATFQLTKD (166 aa). Arginine 166 is an active-site residue. Cysteine 214 (proton donor) is an active-site residue. The active site involves glutamate 283.

Belongs to the MurB family. The cofactor is FAD.

It is found in the cytoplasm. The catalysed reaction is UDP-N-acetyl-alpha-D-muramate + NADP(+) = UDP-N-acetyl-3-O-(1-carboxyvinyl)-alpha-D-glucosamine + NADPH + H(+). It participates in cell wall biogenesis; peptidoglycan biosynthesis. In terms of biological role, cell wall formation. In Chlamydia trachomatis serovar A (strain ATCC VR-571B / DSM 19440 / HAR-13), this protein is UDP-N-acetylenolpyruvoylglucosamine reductase.